Reading from the N-terminus, the 245-residue chain is MPTTNIKELLEAGAHFGHQTSRWHPRMKKYIFTKRNGIHIIDLEKTVVMLDKACNYINQVVSEGGKVLFVGTKKQAQEILAEEAKRCGMYFINQRWTGGILTNFHSIQSRIDYLVRLEDQQARGDFNRLPKKEAQKLAEEIARLNRTMGGFKEMTRLPDVIFVVDPTKEKIAMAEAKRMGVPLVAMVDTNCNPDEVDYPIPSNDDAMRAIKLICSKMADSVIEAQNALKVTEVETTGEAQAETAG.

It belongs to the universal ribosomal protein uS2 family.

The chain is Small ribosomal subunit protein uS2 from Dehalococcoides mccartyi (strain ATCC BAA-2266 / KCTC 15142 / 195) (Dehalococcoides ethenogenes (strain 195)).